Reading from the N-terminus, the 197-residue chain is Probable calcium-binding protein CML21 (197 aa).

The tract at residues 1–33 (MLRPPPPSSVLTASAAAARPPASVVQPQRQAAH) is disordered. Low complexity predominate over residues 9–30 (SVLTASAAAARPPASVVQPQRQ). 3 consecutive EF-hand domains span residues 37–72 (AETL…LGAR), 126–161 (EKEA…MGLP), and 164–197 (ACMA…AAGN). Ca(2+) is bound by residues Asp50, Asp52, Asp54, Glu61, Asp139, Asp141, Asp143, Tyr145, Glu150, Asp177, Asp179, Asp181, Arg183, and Glu188.

Its function is as follows. Potential calcium sensor. This is Probable calcium-binding protein CML21 (CML21) from Oryza sativa subsp. japonica (Rice).